We begin with the raw amino-acid sequence, 508 residues long: Photosystem II CP47 reaction center protein (508 aa).

Helical transmembrane passes span 21 to 36 (AVHL…WAGS), 101 to 115 (IVLS…IWHW), 140 to 156 (GIHL…FGAF), 203 to 218 (IAAG…FHLC), 237 to 252 (VLSS…AFVV), and 457 to 472 (CFAL…HGAR).

Belongs to the PsbB/PsbC family. PsbB subfamily. In terms of assembly, PSII is composed of 1 copy each of membrane proteins PsbA, PsbB, PsbC, PsbD, PsbE, PsbF, PsbH, PsbI, PsbJ, PsbK, PsbL, PsbM, PsbT, PsbX, PsbY, PsbZ, Psb30/Ycf12, at least 3 peripheral proteins of the oxygen-evolving complex and a large number of cofactors. It forms dimeric complexes. The cofactor is Binds multiple chlorophylls. PSII binds additional chlorophylls, carotenoids and specific lipids..

It is found in the plastid. The protein resides in the chloroplast thylakoid membrane. Its function is as follows. One of the components of the core complex of photosystem II (PSII). It binds chlorophyll and helps catalyze the primary light-induced photochemical processes of PSII. PSII is a light-driven water:plastoquinone oxidoreductase, using light energy to abstract electrons from H(2)O, generating O(2) and a proton gradient subsequently used for ATP formation. The polypeptide is Photosystem II CP47 reaction center protein (Chlorella vulgaris (Green alga)).